A 220-amino-acid chain; its full sequence is Adenylate kinase (220 aa).

10-15 (GAGKGT) is a binding site for ATP. The segment at 30-59 (STGDMLRAAVKAGTPLGVEAKGYMDAGKLV) is NMP. AMP is bound by residues threonine 31, arginine 36, 57–59 (KLV), 85–88 (GFPR), and glutamine 92. An LID region spans residues 122–159 (GRRTHPASGRTYHVKFNPPKVEGHDDVTGEPLIQRDDD). Residues arginine 123 and 132-133 (TY) contribute to the ATP site. AMP-binding residues include arginine 156 and arginine 167. An ATP-binding site is contributed by glycine 206.

This sequence belongs to the adenylate kinase family. Monomer.

The protein resides in the cytoplasm. The catalysed reaction is AMP + ATP = 2 ADP. It participates in purine metabolism; AMP biosynthesis via salvage pathway; AMP from ADP: step 1/1. Functionally, catalyzes the reversible transfer of the terminal phosphate group between ATP and AMP. Plays an important role in cellular energy homeostasis and in adenine nucleotide metabolism. The chain is Adenylate kinase from Burkholderia lata (strain ATCC 17760 / DSM 23089 / LMG 22485 / NCIMB 9086 / R18194 / 383).